The following is a 315-amino-acid chain: Hydrogenase-4 component C (315 aa).

The Periplasmic segment spans residues 1-10 (MRQTLCDGYL). Residues 11 to 31 (VIFALAQAVILLMLTPLFTGI) traverse the membrane as a helical segment. Over 32–73 (SRQIRARMHSRRGPGIWQDYRDIHKLFKRQEVAPTSSGLMFR) the chain is Cytoplasmic. The chain crosses the membrane as a helical span at residues 74–94 (LMPWVLISSMLVLAMALPLFI). Residues 95-98 (TVSP) lie on the Periplasmic side of the membrane. The chain crosses the membrane as a helical span at residues 99–119 (FAGGGDLITLIYLLALFRFFF). The Cytoplasmic segment spans residues 120 to 140 (ALSGLDTGSPFAGVGASRELT). The helical transmembrane segment at 141 to 161 (LGILVEPMLILSLLVLALIAG) threads the bilayer. The Periplasmic portion of the chain corresponds to 162-181 (STHIEMISNTLAMGWNSPLT). The chain crosses the membrane as a helical span at residues 182–202 (TVLALLACGFACFIEMGKIPF). The Cytoplasmic segment spans residues 203–228 (DVAEAEQELQEGPLTEYSGAGLALAK). The chain crosses the membrane as a helical span at residues 229–249 (WGLGLKQVVMASLFVALFLPF). The Periplasmic segment spans residues 250 to 256 (GRAQELS). Residues 257-277 (LACLLTSLVVTLLKVLLIFVL) form a helical membrane-spanning segment. At 278-289 (ASIAENTLARGR) the chain is on the cytoplasmic side. Residues 290 to 310 (FLLIHHVTWLGFSLAALAWVF) form a helical membrane-spanning segment. At 311–315 (WLTGL) the chain is on the periplasmic side.

It belongs to the complex I subunit 1 family.

The protein localises to the cell inner membrane. Its function is as follows. Possible component of hydrogenase 4. The protein is Hydrogenase-4 component C of Escherichia coli (strain K12).